A 354-amino-acid chain; its full sequence is MSKVKSITRESWILSTFPEWGSWLNEEIEQEQVAPGTFAMWWLGCTGIWLKSEGGTNVCVDFWCGTGKQSHGNPLMKQGHQMQRMAGVKKLQPNLRTTPFVLDPFAIRQIDAVLATHDHNDHIDVNVAAAVMQNCADDVPFIGPKTCVDLWIGWGVPKERCIVVKPGDVVKVKDIEIHALDAFDRTALITLPADQKAAGVLPDGMDDRAVNYLFKTPGGTLYHSGDSHYSNYYAKHGNEHQIDVALGSYGENPRGITDKMTSADILRMGEALNAKVVIPFHHDIWSNFQADPQEIRVLWEMKKDRLKYGFKPFIWQVGGKFTWPLDKDNFEYHYPRGFDDCFTIEPDLPFKSFL.

This sequence belongs to the UlaG family. Requires a divalent metal cation as cofactor.

The protein localises to the cytoplasm. It catalyses the reaction L-ascorbate 6-phosphate + H2O = 3-dehydro-L-gulonate 6-phosphate. The protein operates within cofactor degradation; L-ascorbate degradation; D-xylulose 5-phosphate from L-ascorbate: step 1/4. Probably catalyzes the hydrolysis of L-ascorbate-6-P into 3-keto-L-gulonate-6-P. Is essential for L-ascorbate utilization under anaerobic conditions. The protein is Probable L-ascorbate-6-phosphate lactonase UlaG of Escherichia coli (strain SMS-3-5 / SECEC).